A 589-amino-acid chain; its full sequence is Aspartate--tRNA ligase (589 aa).

Glutamate 171 lines the L-aspartate pocket. The tract at residues 195–198 is aspartate; that stretch reads QLFK. Residue arginine 217 coordinates L-aspartate. ATP is bound by residues 217 to 219 and glutamine 226; that span reads RDE. Histidine 448 contacts L-aspartate. Glutamate 482 provides a ligand contact to ATP. Position 489 (arginine 489) interacts with L-aspartate. 534–537 contributes to the ATP binding site; the sequence is GLDR.

Belongs to the class-II aminoacyl-tRNA synthetase family. Type 1 subfamily. As to quaternary structure, homodimer.

It is found in the cytoplasm. The enzyme catalyses tRNA(Asp) + L-aspartate + ATP = L-aspartyl-tRNA(Asp) + AMP + diphosphate. In terms of biological role, catalyzes the attachment of L-aspartate to tRNA(Asp) in a two-step reaction: L-aspartate is first activated by ATP to form Asp-AMP and then transferred to the acceptor end of tRNA(Asp). This Idiomarina loihiensis (strain ATCC BAA-735 / DSM 15497 / L2-TR) protein is Aspartate--tRNA ligase.